Reading from the N-terminus, the 2896-residue chain is Protein PRRC2C (2896 aa).

An N6-acetyllysine modification is found at Lys27. A disordered region spans residues 28-212; sequence GKSLETQKTT…STAGTSEQND (185 aa). Residues 88 to 97 are compositionally biased toward basic and acidic residues; that stretch reads QEQHEEEKTP. A compositionally biased stretch (low complexity) spans 105-119; it reads KPGVAAPPEVAPAPK. Over residues 134–144 the composition is skewed to polar residues; the sequence is QVNSQFQQEFP. A compositionally biased stretch (basic and acidic residues) spans 151-160; it reads DQEKKEKETN. Ser187 and Ser191 each carry phosphoserine. Over residues 201–211 the composition is skewed to polar residues; sequence DESTAGTSEQN. The residue at position 242 (Arg242) is an Asymmetric dimethylarginine; alternate. The residue at position 242 (Arg242) is an Omega-N-methylarginine; alternate. Asymmetric dimethylarginine is present on residues Arg255 and Arg266. Disordered stretches follow at residues 264–729 and 750–788; these read PMRF…QHLA and SGRPAMDIPPIHPGMIPPKPLMRRDQMEGSPNSSESFEH. Residues Arg279 and Arg281 each carry the omega-N-methylarginine modification. The segment covering 301–310 has biased composition (basic and acidic residues); sequence ELKELDKFDN. The residue at position 335 (Ser335) is a Phosphoserine. Positions 341 to 358 are enriched in polar residues; sequence GSNSPKENNSEDQGSKAS. Over residues 359 to 368 the composition is skewed to basic and acidic residues; sequence ENNENKKETD. The span at 370 to 381 shows a compositional bias: polar residues; the sequence is VSNTKSSSQIPA. Lys392 carries the N6-acetyllysine modification. Residues Ser395 and Ser500 each carry the phosphoserine modification. Polar residues predominate over residues 395–405; that stretch reads SFNQERGTSSH. Residues 465–648 show a composition bias toward basic and acidic residues; sequence RREEEERRME…EATPVVHETE (184 aa). Over residues 676 to 708 the composition is skewed to low complexity; that stretch reads QRQQEQMKQQQWQQQQQQGVLPQTVPSQPSSST. Residues 759 to 769 are compositionally biased toward pro residues; the sequence is PIHPGMIPPKP. 3 positions are modified to phosphoserine: Ser779, Ser785, and Ser801. The interval 804-1118 is disordered; sequence RMLWGSDPYP…PVSTVQVEPA (315 aa). Composition is skewed to basic and acidic residues over residues 825–836, 852–867, and 878–888; these read ATEEPEDVRSEA, NQLEAHPKADFIRESS, and SVEDVRPHHTD. Phosphoserine is present on residues Ser867, Ser878, Ser920, and Ser929. Composition is skewed to basic and acidic residues over residues 954 to 993, 1000 to 1010, and 1020 to 1058; these read IDSKEPIERPEEKPKKEGFIRSSEGPKPEKVYKSKSETRW, NRREEVNDRPV, and VLRDMKEEREQRKEKEGEKAEKVTEKVVVKPEKTEKKDL. Positions 1020–1046 form a coiled coil; it reads VLRDMKEEREQRKEKEGEKAEKVTEKV. Residues 1059–1081 show a composition bias toward pro residues; that stretch reads PPPPPPPQPPAPIQPQSVPPPIQ. Residues 1089–1100 show a composition bias toward polar residues; sequence STETATLAQKPS. A Glycyl lysine isopeptide (Lys-Gly) (interchain with G-Cter in SUMO2) cross-link involves residue Lys1133. 4 stretches are compositionally biased toward basic and acidic residues: residues 1143 to 1163, 1170 to 1180, 1214 to 1230, and 1237 to 1248; these read SKDLVIERPRPDSRPAVKKES, YWKEARERDWF, HTRDYPQYRDNKPRAEH, and RQREESETRSES. 8 disordered regions span residues 1143 to 1647, 1670 to 1785, 1905 to 1991, 2005 to 2164, 2218 to 2238, 2257 to 2290, 2317 to 2341, and 2668 to 2701; these read SKDL…DALS, EDPQ…SAPV, APAS…TAEL, ISKK…VSEM, LPNTLPLPKRETIQQSSSLTS, WENSPNVREKGSPVTSTAPPIATGVSSSASGPST, GAGTYTTSSLSTKSTTTSDPPNICK, and DIKPGTPPIAGRSTTPTSSPFRATSTSPNSQSSK. A phosphoserine mark is found at Ser1242, Ser1246, Ser1248, Ser1249, and Ser1263. 4 stretches are compositionally biased toward basic and acidic residues: residues 1261 to 1297, 1305 to 1330, 1381 to 1418, and 1429 to 1446; these read RGSETDTDSEIHESASDKDSLSKGKLPKREERPENKK, FKPDNHVRIDNRLLEKPYVRDDDKAK, EVPKPEDGEPPRRHEQFIPIAADKRPPKFERKFDPARE, and PRQDKPPRFRRLREREAA. 2 positions are modified to phosphothreonine: Thr1265 and Thr1267. Polar residues-rich tracts occupy residues 1457–1469 and 1477–1491; these read TNGTVNNVAQEPV and GNKTPDLSNQNSSDQ. Residues 1505–1517 show a composition bias toward basic and acidic residues; that stretch reads FNERRERDEKKNA. Position 1544 is a phosphoserine (Ser1544). 2 stretches are compositionally biased toward basic and acidic residues: residues 1620–1634 and 1692–1704; these read NSKDSTGKKREDPKP and RLQDEERRKKEEQ. A coiled-coil region spans residues 1682–1717; the sequence is TEVVSKKQQKRLQDEERRKKEEQVIQVWNKKNANEK. Positions 1742 to 1785 are enriched in low complexity; it reads SSASVPPLASAPLPPSTSASVPASTSAPLPATLTPVPASTSAPV. A compositionally biased stretch (pro residues) spans 1913–1929; that stretch reads APAPTPVSAPNPAPPAP. Positions 1943-1952 are enriched in low complexity; sequence PLQTTSQSSK. Thr1965 carries the post-translational modification Phosphothreonine. The span at 1976–1986 shows a compositional bias: polar residues; the sequence is KSIQTPQSHGT. 2 positions are modified to phosphoserine: Ser1983 and Ser2013. Polar residues predominate over residues 2019-2035; sequence SVSAWNKPLTSFGSAPS. Over residues 2075–2088 the composition is skewed to basic and acidic residues; sequence KSADKIPEPKEQRQ. The residue at position 2105 (Ser2105) is a Phosphoserine. Residues 2108 to 2132 are compositionally biased toward basic and acidic residues; it reads ENKEHKPGPIGKERSLKNRKVKDAQ. A Phosphoserine modification is found at Ser2143. Over residues 2257-2267 the composition is skewed to basic and acidic residues; it reads WENSPNVREKG. Residue Ser2260 is modified to Phosphoserine. Residues 2269–2290 show a composition bias toward polar residues; the sequence is PVTSTAPPIATGVSSSASGPST. The segment covering 2320 to 2334 has biased composition (low complexity); it reads TYTTSSLSTKSTTTS. A phosphothreonine mark is found at Thr2673 and Thr2682. Residues 2679–2701 show a composition bias toward polar residues; sequence RSTTPTSSPFRATSTSPNSQSSK. A phosphoserine mark is found at Ser2686 and Ser2694. Arg2814 is modified (omega-N-methylarginine). Residue Arg2823 is modified to Asymmetric dimethylarginine; alternate. Arg2823 bears the Omega-N-methylarginine; alternate mark. A compositionally biased stretch (polar residues) spans 2824-2833; it reads FFSEQQQSKQ. A disordered region spans residues 2824–2896; sequence FFSEQQQSKQ…QAIKTEETKS (73 aa).

In terms of tissue distribution, overexpressed in bladder cancer.

The protein resides in the cytoplasm. Its subcellular location is the stress granule. Functionally, required for efficient formation of stress granules. The chain is Protein PRRC2C from Homo sapiens (Human).